The primary structure comprises 1057 residues: Nuclear RNAi defective-3 protein (1057 aa).

Disordered stretches follow at residues 1 to 89 (MDLL…GLSV) and 344 to 388 (LTNS…ERTV). Over residues 17-30 (STAKKPATSASSTP) the composition is skewed to low complexity. Basic and acidic residues-rich tracts occupy residues 67–81 (PKRE…DPKR) and 356–388 (GGRE…ERTV). One can recognise a PAZ domain in the interval 387-500 (TVSHYQRQFQ…YPMELMSILP (114 aa)). The 325-residue stretch at 677–1001 (GIIAEKRPDM…LAKRGHNNYK (325 aa)) folds into the Piwi domain.

The protein resides in the cytoplasm. It localises to the nucleus. Its function is as follows. Transports small interfering RNAs (siRNAs) from the cytoplasm to the nucleus. Required for RNA interference (RNAi) in nuclei. Required for exogenous RNAi-induced H3K27 methylation. This chain is Nuclear RNAi defective-3 protein (nrde-3), found in Caenorhabditis elegans.